Here is a 226-residue protein sequence, read N- to C-terminus: 3-dehydroquinate dehydratase (226 aa).

3-dehydroquinate is bound by residues Ser9, 32–34 (EVR), and Arg59. The active-site Proton donor/acceptor is the His119. The active-site Schiff-base intermediate with substrate is Lys146. Residues Arg187, Thr208, and Gln212 each contribute to the 3-dehydroquinate site.

Belongs to the type-I 3-dehydroquinase family. In terms of assembly, homodimer.

It carries out the reaction 3-dehydroquinate = 3-dehydroshikimate + H2O. It functions in the pathway metabolic intermediate biosynthesis; chorismate biosynthesis; chorismate from D-erythrose 4-phosphate and phosphoenolpyruvate: step 3/7. Its function is as follows. Involved in the third step of the chorismate pathway, which leads to the biosynthesis of aromatic amino acids. Catalyzes the cis-dehydration of 3-dehydroquinate (DHQ) and introduces the first double bond of the aromatic ring to yield 3-dehydroshikimate. The protein is 3-dehydroquinate dehydratase of Desulfotalea psychrophila (strain LSv54 / DSM 12343).